Here is a 534-residue protein sequence, read N- to C-terminus: Zinc finger protein 703-A (534 aa).

Disordered stretches follow at residues 1–35 (MNCSPPGSSTDTERQSSSSGTPATPCPTLAPTHPV), 90–251 (SQIG…VAPV), and 300–320 (QLPGTLGLPGKPPSSSPLTGA). 3 stretches are compositionally biased toward low complexity: residues 15-34 (QSSSSGTPATPCPTLAPTHP), 115-124 (RSSSLKLGES), and 146-155 (GSSAGGSADK). Residues 173 to 182 (SPSSRVSSPG) are compositionally biased toward polar residues. Residues 185 to 200 (CDSKNNESQEKKEPEA) show a composition bias toward basic and acidic residues. Positions 204–217 (SLETSQANPTLTRA) are enriched in polar residues. Residues 218–229 (SISNSSAESSQS) are compositionally biased toward low complexity. Positions 230–239 (GDVTPSSKSD) are enriched in polar residues. Residues 406-434 (HICNWVSASGPCDKRFATSEELLAHLRTH) form a C2H2-type zinc finger.

Belongs to the Elbow/Noc family.

Its subcellular location is the nucleus. It is found in the cytoplasm. In terms of biological role, transcriptional corepressor which does not bind directly to DNA and may regulate transcription through recruitment of histone deacetylases to gene promoters. Regulates cell adhesion, migration and proliferation. Involved in specification of the lateral neural plate border (NPB). May be required for segmental gene expression during hindbrain development. The protein is Zinc finger protein 703-A (znf703-a) of Xenopus laevis (African clawed frog).